Consider the following 202-residue polypeptide: Small ribosomal subunit protein uS4c (202 aa).

The S4 RNA-binding domain occupies 90–154; sequence MRLDNIIFRL…SQSIITKNLN (65 aa).

It belongs to the universal ribosomal protein uS4 family. In terms of assembly, part of the 30S ribosomal subunit. Contacts protein S5. The interaction surface between S4 and S5 is involved in control of translational fidelity.

The protein localises to the plastid. It localises to the chloroplast. One of the primary rRNA binding proteins, it binds directly to 16S rRNA where it nucleates assembly of the body of the 30S subunit. Functionally, with S5 and S12 plays an important role in translational accuracy. This is Small ribosomal subunit protein uS4c (rps4) from Ricciocarpos natans (Liverwort).